The sequence spans 384 residues: 3,7-dimethylxanthine N-methyltransferase 2 (384 aa).

Positions 18, 61, 66, 100, 101, 139, 140, and 156 each coordinate S-adenosyl-L-homocysteine. Tyr-157 is a theobromine binding site. Cys-158 provides a ligand contact to S-adenosyl-L-homocysteine. 2 residues coordinate theobromine: His-160 and Trp-161. Asn-178 contacts Mg(2+). Residue Ser-237 coordinates theobromine. Mg(2+) is bound by residues Asp-260, Phe-262, and Asn-263. A theobromine-binding site is contributed by Tyr-368.

This sequence belongs to the methyltransferase superfamily. Type-7 methyltransferase family. The cofactor is Mg(2+). As to expression, highly expressed in developing endosperm. Detected in young leaves and flower buds. Present in immature fruits (grains), but barely in mature fruits.

The catalysed reaction is 7-methylxanthine + S-adenosyl-L-methionine = theobromine + S-adenosyl-L-homocysteine + H(+). It catalyses the reaction theobromine + S-adenosyl-L-methionine = caffeine + S-adenosyl-L-homocysteine + H(+). The enzyme catalyses 1,7-dimethylxanthine + S-adenosyl-L-methionine = caffeine + S-adenosyl-L-homocysteine + H(+). Its pathway is alkaloid biosynthesis. Its function is as follows. Involved in the biosynthesis of caffeine. Catalyzes the conversion of 7-methylxanthine (7mX) to theobromine and of theobromine to caffeine. Has 1-N-methylation activity. The sequence is that of 3,7-dimethylxanthine N-methyltransferase 2 from Coffea arabica (Arabian coffee).